We begin with the raw amino-acid sequence, 391 residues long: Coproporphyrin III ferrochelatase (391 aa).

Residues S79 and Y148 each coordinate Fe-coproporphyrin III. Fe(2+)-binding residues include H211 and E305.

Belongs to the ferrochelatase family.

It localises to the cytoplasm. It carries out the reaction Fe-coproporphyrin III + 2 H(+) = coproporphyrin III + Fe(2+). It functions in the pathway porphyrin-containing compound metabolism; protoheme biosynthesis. Involved in coproporphyrin-dependent heme b biosynthesis. Catalyzes the insertion of ferrous iron into coproporphyrin III to form Fe-coproporphyrin III. This chain is Coproporphyrin III ferrochelatase, found in Tropheryma whipplei (strain TW08/27) (Whipple's bacillus).